A 215-amino-acid chain; its full sequence is Cytochrome b6 (215 aa).

Residues 32-52 (IFYCLGGITLTCFLVQVATGF) form a helical membrane-spanning segment. Cysteine 35 serves as a coordination point for heme c. The heme b site is built by histidine 86 and histidine 100. 3 helical membrane passes run 90–110 (ASMMVLMMILHVFRVYLTGGF), 116–136 (LTWVTGVILAVLTVSFGVTGY), and 186–206 (LHTFILPLLTAVFMPMHFLMI). 2 residues coordinate heme b: histidine 187 and histidine 202.

The protein belongs to the cytochrome b family. PetB subfamily. In terms of assembly, the 4 large subunits of the cytochrome b6-f complex are cytochrome b6, subunit IV (17 kDa polypeptide, PetD), cytochrome f and the Rieske protein, while the 4 small subunits are PetG, PetL, PetM and PetN. The complex functions as a dimer. Requires heme b as cofactor. Heme c serves as cofactor.

The protein resides in the plastid. The protein localises to the chloroplast thylakoid membrane. Functionally, component of the cytochrome b6-f complex, which mediates electron transfer between photosystem II (PSII) and photosystem I (PSI), cyclic electron flow around PSI, and state transitions. This Pinus koraiensis (Korean pine) protein is Cytochrome b6.